Reading from the N-terminus, the 286-residue chain is uncharacterized protein (286 aa).

Catalysis depends on histidine 183, which acts as the Proton donor. The active-site Nucleophile is the cysteine 277.

It belongs to the DDAH family.

This is an uncharacterized protein from Bacillus subtilis (strain 168).